A 196-amino-acid polypeptide reads, in one-letter code: MITVALIDDHLIVRSGFAQLLGLEPDLQVVAEFGSGREALAGLPGRGVQVCICDISMPDISGLELLSQLPKGMATIMLSVHDSPALVEQALNAGARGFLSKRCSPDELIAAVHTVATGGCYLTPDIAIKLASGRQDPLTKRERQVAEKLAQGMAVKEIAAELGLSPKTVHVHRANLMEKLGVSNDVELARRMFDGW.

Positions 3–116 (TVALIDDHLI…ELIAAVHTVA (114 aa)) constitute a Response regulatory domain. Residue D54 is modified to 4-aspartylphosphate. The HTH luxR-type domain occupies 131-196 (ASGRQDPLTK…ELARRMFDGW (66 aa)). The segment at residues 155–174 (VKEIAAELGLSPKTVHVHRA) is a DNA-binding region (H-T-H motif).

Post-translationally, phosphorylated and dephosphorylated by UhpB.

It is found in the cytoplasm. Its activity is regulated as follows. Phosphorylation by UhpB enhances DNA binding activity. Its function is as follows. Part of the UhpABC signaling cascade that controls the expression of the hexose phosphate transporter UhpT. Activates the transcription of the uhpT gene. Acts by binding specifically to the uhpT promoter region. This is Transcriptional regulatory protein UhpA (uhpA) from Escherichia coli (strain K12).